The sequence spans 257 residues: Snake venom serine protease KN1 (257 aa).

A signal peptide spans 1-18 (MVLIRVLANLLILQLSYA). Residues 19–24 (QKSSEL) constitute a propeptide that is removed on maturation. In terms of domain architecture, Peptidase S1 spans 25–248 (VVGGHPCNIN…HLDWIKSIIA (224 aa)). Disulfide bonds link Cys-31-Cys-162, Cys-49-Cys-65, Cys-141-Cys-209, Cys-173-Cys-188, and Cys-199-Cys-224. The Charge relay system role is filled by His-64. Asn-102 carries an N-linked (GlcNAc...) asparagine glycan. Asp-109 serves as the catalytic Charge relay system. Asn-120 and Asn-121 each carry an N-linked (GlcNAc...) asparagine glycan. Ser-203 functions as the Charge relay system in the catalytic mechanism.

The protein belongs to the peptidase S1 family. Snake venom subfamily. As to quaternary structure, monomer. Expressed by the venom gland.

The protein resides in the secreted. Snake venom serine protease that may act in the hemostasis system of the prey. This is Snake venom serine protease KN1 from Trimeresurus stejnegeri (Chinese green tree viper).